The chain runs to 639 residues: ATP-dependent zinc metalloprotease FtsH (639 aa).

At 1–20 the chain is on the cytoplasmic side; it reads MNGNNNMNNNGKSNNKKKNK. Residues 21–41 form a helical membrane-spanning segment; sequence NWILGLVVVFLISAIFMSYFI. The Periplasmic segment spans residues 42–120; sequence RGGESYKNVP…LSSGKSQASL (79 aa). A helical transmembrane segment spans residues 121–141; that stretch reads IGVLLQTLPWILFFIFFFFIF. Residues 142–639 are Cytoplasmic-facing; that stretch reads RQTQGGGGKV…KEVKGEDVKG (498 aa). An ATP-binding site is contributed by 212 to 219; the sequence is GSPGTGKT. Residue H434 coordinates Zn(2+). Residue E435 is part of the active site. 2 residues coordinate Zn(2+): H438 and D510.

This sequence in the central section; belongs to the AAA ATPase family. In the C-terminal section; belongs to the peptidase M41 family. In terms of assembly, homohexamer. Zn(2+) serves as cofactor.

Its subcellular location is the cell inner membrane. Acts as a processive, ATP-dependent zinc metallopeptidase for both cytoplasmic and membrane proteins. Plays a role in the quality control of integral membrane proteins. The sequence is that of ATP-dependent zinc metalloprotease FtsH from Borreliella burgdorferi (strain ZS7) (Borrelia burgdorferi).